The primary structure comprises 308 residues: ADP-L-glycero-D-manno-heptose-6-epimerase (308 aa).

Residues 10 to 11 (FI), 31 to 32 (DN), K38, K53, 75 to 79 (EGACS), and N92 each bind NADP(+). The Proton acceptor role is filled by Y139. K143 contacts NADP(+). N168 contributes to the substrate binding site. NADP(+)-binding residues include V169 and K177. K177 acts as the Proton acceptor in catalysis. Residues S179, H186, 200–203 (FAGS), R208, and Y271 contribute to the substrate site.

It belongs to the NAD(P)-dependent epimerase/dehydratase family. HldD subfamily. In terms of assembly, homopentamer. NADP(+) is required as a cofactor.

It carries out the reaction ADP-D-glycero-beta-D-manno-heptose = ADP-L-glycero-beta-D-manno-heptose. It participates in nucleotide-sugar biosynthesis; ADP-L-glycero-beta-D-manno-heptose biosynthesis; ADP-L-glycero-beta-D-manno-heptose from D-glycero-beta-D-manno-heptose 7-phosphate: step 4/4. Functionally, catalyzes the interconversion between ADP-D-glycero-beta-D-manno-heptose and ADP-L-glycero-beta-D-manno-heptose via an epimerization at carbon 6 of the heptose. This Haemophilus influenzae (strain PittGG) protein is ADP-L-glycero-D-manno-heptose-6-epimerase.